The following is a 539-amino-acid chain: GMP synthase [glutamine-hydrolyzing] (539 aa).

The region spanning 4–202 (KILILDFGSQ…VLQIAGAKPD (199 aa)) is the Glutamine amidotransferase type-1 domain. Cys81 acts as the Nucleophile in catalysis. Residues His176 and Glu178 contribute to the active site. One can recognise a GMPS ATP-PPase domain in the interval 203-395 (WIMKNHIEEA…LGLPPEMVYR (193 aa)). Residue 230–236 (SGGVDSS) coordinates ATP.

Homodimer.

It catalyses the reaction XMP + L-glutamine + ATP + H2O = GMP + L-glutamate + AMP + diphosphate + 2 H(+). The protein operates within purine metabolism; GMP biosynthesis; GMP from XMP (L-Gln route): step 1/1. Its function is as follows. Catalyzes the synthesis of GMP from XMP. This Burkholderia vietnamiensis (strain G4 / LMG 22486) (Burkholderia cepacia (strain R1808)) protein is GMP synthase [glutamine-hydrolyzing].